A 474-amino-acid polypeptide reads, in one-letter code: Ribosomal RNA small subunit methyltransferase F (474 aa).

Residues 121–127, Glu-145, Asp-172, and Asp-190 each bind S-adenosyl-L-methionine; that span reads ASAPGSK. Cys-243 (nucleophile) is an active-site residue.

Belongs to the class I-like SAM-binding methyltransferase superfamily. RsmB/NOP family.

It localises to the cytoplasm. The enzyme catalyses cytidine(1407) in 16S rRNA + S-adenosyl-L-methionine = 5-methylcytidine(1407) in 16S rRNA + S-adenosyl-L-homocysteine + H(+). Specifically methylates the cytosine at position 1407 (m5C1407) of 16S rRNA. The sequence is that of Ribosomal RNA small subunit methyltransferase F from Shewanella piezotolerans (strain WP3 / JCM 13877).